Here is an 894-residue protein sequence, read N- to C-terminus: Valine--tRNA ligase (894 aa).

A 'HIGH' region motif is present at residues Pro48 to His58. The 'KMSKS' region motif lies at Lys527–Ser531. Lys530 provides a ligand contact to ATP. Residues Leu827 to Ser852 are a coiled coil.

This sequence belongs to the class-I aminoacyl-tRNA synthetase family. ValS type 1 subfamily. In terms of assembly, monomer.

The protein resides in the cytoplasm. The enzyme catalyses tRNA(Val) + L-valine + ATP = L-valyl-tRNA(Val) + AMP + diphosphate. Its function is as follows. Catalyzes the attachment of valine to tRNA(Val). As ValRS can inadvertently accommodate and process structurally similar amino acids such as threonine, to avoid such errors, it has a 'posttransfer' editing activity that hydrolyzes mischarged Thr-tRNA(Val) in a tRNA-dependent manner. The polypeptide is Valine--tRNA ligase (Bdellovibrio bacteriovorus (strain ATCC 15356 / DSM 50701 / NCIMB 9529 / HD100)).